We begin with the raw amino-acid sequence, 559 residues long: Formate--tetrahydrofolate ligase (559 aa).

ATP is bound at residue 68-75 (TPAGEGKT).

Belongs to the formate--tetrahydrofolate ligase family.

The enzyme catalyses (6S)-5,6,7,8-tetrahydrofolate + formate + ATP = (6R)-10-formyltetrahydrofolate + ADP + phosphate. Its pathway is one-carbon metabolism; tetrahydrofolate interconversion. This Sinorhizobium fredii (strain NBRC 101917 / NGR234) protein is Formate--tetrahydrofolate ligase.